Reading from the N-terminus, the 322-residue chain is MSKKIGILTSGGDAPGMNSAISFLTKSALSLGFEPYLIFDGYSGIIARKILPAKNFPYNGISSFGGTAIGSSRFPEFKKEEVQNKAVEILSEIGISSLVVVGGDGTYNGGYKLHLKGIKVIALPGTIDNDIQFTDYTIGFDTALNTIVETIDKLRDTANSHRRCFVVEVMGRHCQDLALYSAMATGSEILITNTNILSPEEVSQKVLEQFAKGKPSVIVTITENILPNLKEFAAKIEELTKISTRSLEVGHTQRGGRPSAFDRILAAKMAMKAMELINQDKSGLAISYLDGKIQTFDIAKVVSNPVRKTNDLVLEINKINQN.

Residues Gly-12, 73 to 74 (RF), and 103 to 106 (GDGT) each bind ATP. Asp-104 provides a ligand contact to Mg(2+). 126-128 (TID) contacts substrate. Catalysis depends on Asp-128, which acts as the Proton acceptor. Arg-155 is a binding site for ADP. Substrate-binding positions include Arg-163 and 170 to 172 (MGR). Residues 186–188 (GSE), Lys-212, and 214–216 (KPS) contribute to the ADP site. Substrate is bound by residues Glu-223, Arg-245, and 251-254 (HTQR).

This sequence belongs to the phosphofructokinase type A (PFKA) family. ATP-dependent PFK group I subfamily. Prokaryotic clade 'B1' sub-subfamily. As to quaternary structure, homotetramer. Mg(2+) is required as a cofactor.

The protein localises to the cytoplasm. It carries out the reaction beta-D-fructose 6-phosphate + ATP = beta-D-fructose 1,6-bisphosphate + ADP + H(+). The protein operates within carbohydrate degradation; glycolysis; D-glyceraldehyde 3-phosphate and glycerone phosphate from D-glucose: step 3/4. Allosterically activated by ADP and other diphosphonucleosides, and allosterically inhibited by phosphoenolpyruvate. Its function is as follows. Catalyzes the phosphorylation of D-fructose 6-phosphate to fructose 1,6-bisphosphate by ATP, the first committing step of glycolysis. The chain is ATP-dependent 6-phosphofructokinase from Mesomycoplasma hyopneumoniae (strain 7448) (Mycoplasma hyopneumoniae).